The chain runs to 115 residues: Transcriptional regulator protein FixT (115 aa).

In terms of assembly, interacts directly with FixL.

Functionally, prevents transcription of the intermediate key regulatory genes nifA and fixK by counteracting the activity of the FixLJ two-component system. Acts as an inhibitor of the sensor hemoprotein kinase fixL, preventing the production or the accumulation of its phosphorylated form. The sequence is that of Transcriptional regulator protein FixT (fixT) from Rhizobium meliloti (strain 1021) (Ensifer meliloti).